The following is a 164-amino-acid chain: Crossover junction endodeoxyribonuclease RuvC (164 aa).

Residues Asp7, Glu67, and Asp139 contribute to the active site. Mg(2+)-binding residues include Asp7, Glu67, and Asp139.

Belongs to the RuvC family. As to quaternary structure, homodimer which binds Holliday junction (HJ) DNA. The HJ becomes 2-fold symmetrical on binding to RuvC with unstacked arms; it has a different conformation from HJ DNA in complex with RuvA. In the full resolvosome a probable DNA-RuvA(4)-RuvB(12)-RuvC(2) complex forms which resolves the HJ. Requires Mg(2+) as cofactor.

Its subcellular location is the cytoplasm. The enzyme catalyses Endonucleolytic cleavage at a junction such as a reciprocal single-stranded crossover between two homologous DNA duplexes (Holliday junction).. In terms of biological role, the RuvA-RuvB-RuvC complex processes Holliday junction (HJ) DNA during genetic recombination and DNA repair. Endonuclease that resolves HJ intermediates. Cleaves cruciform DNA by making single-stranded nicks across the HJ at symmetrical positions within the homologous arms, yielding a 5'-phosphate and a 3'-hydroxyl group; requires a central core of homology in the junction. The consensus cleavage sequence is 5'-(A/T)TT(C/G)-3'. Cleavage occurs on the 3'-side of the TT dinucleotide at the point of strand exchange. HJ branch migration catalyzed by RuvA-RuvB allows RuvC to scan DNA until it finds its consensus sequence, where it cleaves and resolves the cruciform DNA. The chain is Crossover junction endodeoxyribonuclease RuvC from Geobacter sulfurreducens (strain ATCC 51573 / DSM 12127 / PCA).